A 314-amino-acid polypeptide reads, in one-letter code: 4-hydroxy-3-methylbut-2-enyl diphosphate reductase (314 aa).

C12 is a [4Fe-4S] cluster binding site. Residues H41 and H74 each contribute to the (2E)-4-hydroxy-3-methylbut-2-enyl diphosphate site. Dimethylallyl diphosphate contacts are provided by H41 and H74. Isopentenyl diphosphate contacts are provided by H41 and H74. Position 96 (C96) interacts with [4Fe-4S] cluster. Residue H124 participates in (2E)-4-hydroxy-3-methylbut-2-enyl diphosphate binding. H124 lines the dimethylallyl diphosphate pocket. H124 contacts isopentenyl diphosphate. E126 functions as the Proton donor in the catalytic mechanism. (2E)-4-hydroxy-3-methylbut-2-enyl diphosphate is bound at residue T167. C197 is a binding site for [4Fe-4S] cluster. 4 residues coordinate (2E)-4-hydroxy-3-methylbut-2-enyl diphosphate: S225, S226, N227, and S269. Dimethylallyl diphosphate contacts are provided by S225, S226, N227, and S269. Isopentenyl diphosphate is bound by residues S225, S226, N227, and S269.

Belongs to the IspH family. It depends on [4Fe-4S] cluster as a cofactor.

It catalyses the reaction isopentenyl diphosphate + 2 oxidized [2Fe-2S]-[ferredoxin] + H2O = (2E)-4-hydroxy-3-methylbut-2-enyl diphosphate + 2 reduced [2Fe-2S]-[ferredoxin] + 2 H(+). The catalysed reaction is dimethylallyl diphosphate + 2 oxidized [2Fe-2S]-[ferredoxin] + H2O = (2E)-4-hydroxy-3-methylbut-2-enyl diphosphate + 2 reduced [2Fe-2S]-[ferredoxin] + 2 H(+). Its pathway is isoprenoid biosynthesis; dimethylallyl diphosphate biosynthesis; dimethylallyl diphosphate from (2E)-4-hydroxy-3-methylbutenyl diphosphate: step 1/1. It functions in the pathway isoprenoid biosynthesis; isopentenyl diphosphate biosynthesis via DXP pathway; isopentenyl diphosphate from 1-deoxy-D-xylulose 5-phosphate: step 6/6. In terms of biological role, catalyzes the conversion of 1-hydroxy-2-methyl-2-(E)-butenyl 4-diphosphate (HMBPP) into a mixture of isopentenyl diphosphate (IPP) and dimethylallyl diphosphate (DMAPP). Acts in the terminal step of the DOXP/MEP pathway for isoprenoid precursor biosynthesis. The protein is 4-hydroxy-3-methylbut-2-enyl diphosphate reductase of Idiomarina loihiensis (strain ATCC BAA-735 / DSM 15497 / L2-TR).